Consider the following 757-residue polypeptide: MFQSNQYDEYNKTNKSDEENESNENENENENENENRSEDGDQDSEDSFIYEEDDEEEEDTPKLSFGAKFLAKHGHIEGQGLGKEKDGRIDLIEVDRFQSTKGLGFAENDLPEFYRVTKHILEDEDVDFPSKQRFEWISCNSEGYNFWEGFPVDHTLVKFVANDSITDKPRRGHCSVELLMELDQHKNALDTLDPNRFYVARKKSNPYESIKGSIFINRAAVKMANIDKLADLLTPIIPVPGKPRDFIYFGDVCAGPGGFTEYVYWKKTRGGKIKGEEGLDLDDVVKGFGFTIKGQCDWNVEKFSKQIPIHNFVKEYGLDDTGNILKSENIRDFSSKVFYNTNGFGLQLFLADGGINTDGKESLQELMLQQLILCQILTMFETIGRGGNFVCKIFDTFTPFTIGLLYLVYQHFQSFSIVKPFTSRPLNSERYIICKNFLSYRPMNIIDFLHYINSLLNNNQTILELIEINSMDPNFLRYILESNELICLRQIKAFSLFKKYVEDIELPPIDQKEIRAKCLEEWGLPKETKYDIENYQKHKNRQKHHHNNHSNNNNNNNNSNNNNNNNNQHQHQHHQHQHHQNQHQNQYQHQNQHKKYNNNINNNSNNSSPNSSPNLTSSPNLNSPPNINNGNNHQNNNNNNSNNNNNNNNNNNNNNNNNNNNNNNNNNNKNRRFISTKLVKNNSQFQQKPPPPHRHMSPLQIQQQFLLQQQKEQQLLQQPQKDQLHQLHQQQSQSALPDFSAANFMEALLKRKNDSQQ.

Residues 1–61 (MFQSNQYDEY…EDDEEEEDTP (61 aa)) form a disordered region. 2 stretches are compositionally biased toward acidic residues: residues 18–32 (EENESNENENENENE) and 40–59 (GDQDSEDSFIYEEDDEEEED). Positions 62-108 (KLSFGAKFLAKHGHIEGQGLGKEKDGRIDLIEVDRFQSTKGLGFAEN) constitute a G-patch domain. The 225-residue stretch at 214–438 (IFINRAAVKM…ERYIICKNFL (225 aa)) folds into the RrmJ-type SAM-dependent 2'-O-MTase domain. Positions 257, 301, and 352 each coordinate S-adenosyl-L-methionine. The active-site Proton acceptor is the K392. A compositionally biased stretch (basic residues) spans 538 to 548 (HKNRQKHHHNN). The segment at 538–670 (HKNRQKHHHN…NNNNNNNNKN (133 aa)) is disordered. Residues 549–569 (HSNNNNNNNNSNNNNNNNNQH) show a composition bias toward low complexity. Residues 570–581 (QHQHHQHQHHQN) show a composition bias toward basic residues. Positions 597–668 (NNNINNNSNN…NNNNNNNNNN (72 aa)) are enriched in low complexity.

It carries out the reaction a 5'-end (N(7)-methyl 5'-triphosphoguanosine)-ribonucleoside in mRNA + S-adenosyl-L-methionine = a 5'-end (N(7)-methyl 5'-triphosphoguanosine)-(2'-O-methyl-ribonucleoside) in mRNA + S-adenosyl-L-homocysteine + H(+). Functionally, S-adenosyl-L-methionine-dependent methyltransferase that mediates mRNA cap1 2'-O-ribose methylation to the 5'-cap structure of mRNAs. Methylates the ribose of the first nucleotide of a m(7)GpppG-capped mRNA to produce m(7)GpppNmp (cap1). Cap1 modification is linked to higher levels of translation. This chain is Cap-specific mRNA (nucleoside-2'-O-)-methyltransferase 1, found in Dictyostelium discoideum (Social amoeba).